A 261-amino-acid chain; its full sequence is Methyltransferase nsrG (261 aa).

A methyltransferase domain region spans residues 49–141; that stretch reads DVGAGNGPYA…AHQLRPGALF (93 aa).

This sequence belongs to the methyltransferase superfamily.

It functions in the pathway secondary metabolite biosynthesis. Its function is as follows. Methyltransferase; part of the gene cluster that mediates the biosynthesis of the tetrahydroxanthone dimer neosartorin, which exhibits antibacterial activity. The two different monomeric units appear to be synthesized by the same set of enzymes, among which the Baeyer-Villiger monooxygenase nsrF is the key enzyme for the divergence of the biosynthetic routes. The pathway begins with the synthesis of atrochrysone thioester by the polyketide synthase nsrB. The atrochrysone carboxyl ACP thioesterase nsrC then breaks the thioester bond and releases the atrochrysone carboxylic acid from AacuL. Atrochrysone carboxylic acid is decarboxylated by the decarboxylase nsrE, and oxidized by the anthrone oxygenase nsrD to yield emodin. Emodin is then reduced to emodin hydroquinone by the oxidoreductase nsrR. A-ring reduction by the short chain dehydrogenase nsrJ, dehydration by the scytalone dehydratase-like protein nsrI and probable spontaneous re-oxidation, results in overall deoxygenation to chrysophanol. The Baeyer-Villiger monooxygenase nsrF accepts chrysophanol as a substrate to insert one oxygen atom at two different positions to yield the precursors of both monomric units. NsrF is promiscuous/flexible in interacting with the 2 (non methylated and methylated) aromatic rings of chrysophanol, thus diverging the biosynthetic pathway at this point. After the hydrolysis of the lactones, methylesterification by the methyltransferase nsrG yields respectively moniliphenone and 2,2',6'-trihydroxy-4-methyl-6-methoxya-cyldiphenylmethanone. The next steps are the hydroxylation by the FAD-dependent monooxygenase nsrK, followed by isomerization by the monooxygenase nsrQ. The short chain dehydrogenase/reductase nsrO then catalyzes the C-5 ketoreduction to give the xanthone skeleton of blennolide C and 5-acetylblennolide A. The acetyltransferase nsrL has a strict substrate specificity and uses only blennolide A but not blennolide C to yield 5-acetylblennolide A as the single-acetylated product. In the final step of the biosynthesis, the heterodimerization of the 2 xanthones, blennolide C and 5-acetylblennolide A, is catalyzed by the cytochrome P450 monooxygenase nsrP. NsrP can utilize at least three different xanthones as its substrates to perform the dimerization reaction. This chain is Methyltransferase nsrG, found in Aspergillus novofumigatus (strain IBT 16806).